The chain runs to 112 residues: NNVTIIVMITNLLENGRKKCDQYWPHDGREQYKHISVTLRDVDIYANYIVRSFQLRNTKLSKRRSRNNERRILQYHYTQWPDHGTPEYILPLLKFIRISSVVSSPESGPIVV.

Residues 1 to 112 (NNVTIIVMIT…SSPESGPIVV (112 aa)) enclose the Tyrosine-protein phosphatase domain. Asp82 contributes to the substrate binding site.

It belongs to the protein-tyrosine phosphatase family.

It carries out the reaction O-phospho-L-tyrosyl-[protein] + H2O = L-tyrosyl-[protein] + phosphate. The polypeptide is Tyrosine-protein phosphatase 7 (STY-7) (Styela plicata (Wrinkled sea squirt)).